The following is a 293-amino-acid chain: Elongation factor Ts (293 aa).

The segment at 80–83 (TDFV) is involved in Mg(2+) ion dislocation from EF-Tu.

It belongs to the EF-Ts family.

The protein resides in the cytoplasm. Functionally, associates with the EF-Tu.GDP complex and induces the exchange of GDP to GTP. It remains bound to the aminoacyl-tRNA.EF-Tu.GTP complex up to the GTP hydrolysis stage on the ribosome. This is Elongation factor Ts from Aeromonas hydrophila subsp. hydrophila (strain ATCC 7966 / DSM 30187 / BCRC 13018 / CCUG 14551 / JCM 1027 / KCTC 2358 / NCIMB 9240 / NCTC 8049).